Reading from the N-terminus, the 129-residue chain is Small ribosomal subunit protein uS11 (129 aa).

Belongs to the universal ribosomal protein uS11 family. As to quaternary structure, part of the 30S ribosomal subunit. Interacts with proteins S7 and S18. Binds to IF-3.

Its function is as follows. Located on the platform of the 30S subunit, it bridges several disparate RNA helices of the 16S rRNA. Forms part of the Shine-Dalgarno cleft in the 70S ribosome. This chain is Small ribosomal subunit protein uS11, found in Roseobacter denitrificans (strain ATCC 33942 / OCh 114) (Erythrobacter sp. (strain OCh 114)).